The chain runs to 262 residues: Deaminated glutathione amidase (262 aa).

One can recognise a CN hydrolase domain in the interval 1-238 (MLVAAGQFAV…PALIMAEVTP (238 aa)). E40 acts as the Proton acceptor in catalysis. K110 acts as the Proton donor in catalysis. C147 acts as the Nucleophile in catalysis.

It belongs to the carbon-nitrogen hydrolase superfamily. NIT1/NIT2 family.

The catalysed reaction is N-(4-oxoglutaryl)-L-cysteinylglycine + H2O = L-cysteinylglycine + 2-oxoglutarate. Its function is as follows. Hydrolyzes deaminated glutathione (dGSH) to 2-oxoglutarate and L-cysteinylglycine, and no activity on glutathione or L-glutamine. May function as a metabolite repair enzyme. The chain is Deaminated glutathione amidase (ybeM) from Escherichia coli O157:H7.